A 485-amino-acid polypeptide reads, in one-letter code: Adenosylhomocysteinase (485 aa).

Substrate contacts are provided by T64, D139, and E205. Position 206–208 (206–208 (TTT)) interacts with NAD(+). Residues K235 and D239 each contribute to the substrate site. Residues N240, 269–274 (GYGDVG), E292, N327, 348–350 (IGH), and N397 contribute to the NAD(+) site.

Belongs to the adenosylhomocysteinase family. The cofactor is NAD(+).

It catalyses the reaction S-adenosyl-L-homocysteine + H2O = L-homocysteine + adenosine. The protein operates within amino-acid biosynthesis; L-homocysteine biosynthesis; L-homocysteine from S-adenosyl-L-homocysteine: step 1/1. Its function is as follows. Adenosylhomocysteine is a competitive inhibitor of S-adenosyl-L-methionine-dependent methyl transferase reactions; therefore adenosylhomocysteinase may play a key role in the control of methylations via regulation of the intracellular concentration of adenosylhomocysteine. The chain is Adenosylhomocysteinase (SAHH) from Nicotiana sylvestris (Wood tobacco).